Consider the following 202-residue polypeptide: MRANSPTQGISLKMHQARPLFLVTVALQLIGLGYSYQSEGDGAREVSNILSPVIPGTTLDRTLSNSSRKNDIPEGARLWDSLPDSSTLGESAVPVSRCCHNGGTCVLGSFCVCPAYFTGRYCEHDQRRRDCGALGHGAWTLHSCRLCRCIFSALYCLPHQTFSHCDLKSFLSSGARGSRECSIPSLLLLVLCLLLQGVAGKG.

A signal peptide spans 1–35 (MRANSPTQGISLKMHQARPLFLVTVALQLIGLGYS). A glycan (N-linked (GlcNAc...) asparagine) is linked at Asn-65. Residues 94–123 (PVSRCCHNGGTCVLGSFCVCPAYFTGRYCE) enclose the EGF-like domain. Intrachain disulfides connect Cys-98-Cys-105, Cys-99-Cys-111, and Cys-113-Cys-122. Asp-166 carries the GPI-anchor amidated aspartate lipid modification. A propeptide spans 167-202 (LKSFLSSGARGSRECSIPSLLLLVLCLLLQGVAGKG) (removed in mature form).

It belongs to the EGF-CFC (Cripto-1/FRL1/Cryptic) family. N-glycosylated. No expressed in adult tissues.

It is found in the cell membrane. Its subcellular location is the secreted. In terms of biological role, nodal coreceptor involved in the correct establishment of the left-right axis. May play a role in mesoderm and/or neural patterning during gastrulation. This Mus musculus (Mouse) protein is Cryptic protein (Cfc1).